Reading from the N-terminus, the 519-residue chain is Probable FAD synthase (519 aa).

The tract at residues 17–108 is molybdenum cofactor biosynthesis protein-like; it reads AILVIGDEIL…TDQMQFSDEI (92 aa). Residues 328–485 are FAD synthase; that stretch reads QIALSFNGGK…SLGGRDNTVK (158 aa).

It in the N-terminal section; belongs to the MoaB/Mog family. The protein in the C-terminal section; belongs to the PAPS reductase family. FAD1 subfamily. It depends on Mg(2+) as a cofactor.

The catalysed reaction is FMN + ATP + H(+) = FAD + diphosphate. The protein operates within cofactor biosynthesis; FAD biosynthesis; FAD from FMN: step 1/1. Its function is as follows. Catalyzes the adenylation of flavin mononucleotide (FMN) to form flavin adenine dinucleotide (FAD) coenzyme. The protein is Probable FAD synthase of Caenorhabditis elegans.